The primary structure comprises 439 residues: Dolichyl-diphosphooligosaccharide--protein glycosyltransferase 48 kDa subunit (439 aa).

The first 25 residues, 1-25, serve as a signal peptide directing secretion; sequence MELGAAARAWSLLWLLLPLLGLVGA. Over 27 to 410 the chain is Lumenal; that stretch reads GPRTLVLLDN…YERFIPSAYP (384 aa). A helical membrane pass occupies residues 411–430; it reads YYASAFSMMVGLFIFSVVFL. Topologically, residues 431–439 are cytoplasmic; that stretch reads HMKEKEKSD.

It belongs to the DDOST 48 kDa subunit family. Component of the oligosaccharyltransferase (OST) complex. OST exists in two different complex forms which contain common core subunits RPN1, RPN2, OST48, OST4, DAD1 and TMEM258, either STT3A or STT3B as catalytic subunits, and form-specific accessory subunits. STT3A complex assembly occurs through the formation of 3 subcomplexes. Subcomplex 1 contains RPN1 and TMEM258, subcomplex 2 contains the STT3A-specific subunits STT3A, DC2/OSTC, and KCP2 as well as the core subunit OST4, and subcomplex 3 contains RPN2, DAD1, and OST48. The STT3A complex can form stable complexes with the Sec61 complex or with both the Sec61 and TRAP complexes. Interacts with SMIM22.

The protein resides in the endoplasmic reticulum membrane. It participates in protein modification; protein glycosylation. In terms of biological role, subunit of the oligosaccharyl transferase (OST) complex that catalyzes the initial transfer of a defined glycan (Glc(3)Man(9)GlcNAc(2) in eukaryotes) from the lipid carrier dolichol-pyrophosphate to an asparagine residue within an Asn-X-Ser/Thr consensus motif in nascent polypeptide chains, the first step in protein N-glycosylation. N-glycosylation occurs cotranslationally and the complex associates with the Sec61 complex at the channel-forming translocon complex that mediates protein translocation across the endoplasmic reticulum (ER). All subunits are required for a maximal enzyme activity. Required for the assembly of both SST3A- and SS3B-containing OST complexes. The sequence is that of Dolichyl-diphosphooligosaccharide--protein glycosyltransferase 48 kDa subunit from Sus scrofa (Pig).